Reading from the N-terminus, the 311-residue chain is Ribosomal protein L11 methyltransferase (311 aa).

Residues threonine 162, glycine 183, aspartate 205, and asparagine 248 each contribute to the S-adenosyl-L-methionine site.

The protein belongs to the methyltransferase superfamily. PrmA family.

The protein resides in the cytoplasm. It carries out the reaction L-lysyl-[protein] + 3 S-adenosyl-L-methionine = N(6),N(6),N(6)-trimethyl-L-lysyl-[protein] + 3 S-adenosyl-L-homocysteine + 3 H(+). Methylates ribosomal protein L11. In Bacillus pumilus (strain SAFR-032), this protein is Ribosomal protein L11 methyltransferase.